We begin with the raw amino-acid sequence, 196 residues long: Fucoxanthin-chlorophyll a-c binding protein A, chloroplastic (196 aa).

The N-terminal 31 residues, 1-31 (MKFAVFASLLASRAAFAPAQQSARTSVATNM), are a transit peptide targeting the chloroplast. Helical transmembrane passes span 73-94 (ICML…PGDI), 114-134 (VPGA…IAVM), and 174-196 (GRAA…SILP).

The protein belongs to the fucoxanthin chlorophyll protein family. The LHC complex of chromophytic algae is composed of fucoxanthin, chlorophyll A and C bound non-covalently by fucoxanthin chlorophyll proteins (FCPs). The ratio of the pigments in LHC; fucoxanthin: chlorophyll C: chlorophyll A; (0.6-1): (0.1-0.3): (1).

It localises to the plastid. Its subcellular location is the chloroplast thylakoid membrane. Its function is as follows. The light-harvesting complex (LHC) functions as a light receptor, it captures and delivers excitation energy to photosystems with which it is closely associated. Energy is transferred from the carotenoid and chlorophyll C (or B) to chlorophyll A and the photosynthetic reaction centers where it is used to synthesize ATP and reducing power. The sequence is that of Fucoxanthin-chlorophyll a-c binding protein A, chloroplastic (FCPA) from Phaeodactylum tricornutum (Diatom).